Here is a 74-residue protein sequence, read N- to C-terminus: Cecropin-P2 (74 aa).

Positions 1-13 are cleaved as a signal peptide; that stretch reads MIFIYLLVQTAES. Residues 45-74 constitute a propeptide, removed in mature form; it reads RRRFVVQQDTISPRLEVDERFLPNSVQEQI.

Belongs to the cecropin family. As to expression, expressed in the body wall, intestine, uterus and ovary.

Its subcellular location is the secreted. Has antibacterial activity against several Gram-positive and Gram-negative bacteria. Is weakly active against yeasts. Acts by a nonpore mechanism. This Ascaris suum (Pig roundworm) protein is Cecropin-P2 (ASCEC-2).